Reading from the N-terminus, the 423-residue chain is Adenylosuccinate synthetase (423 aa).

Residues 13 to 19 and 41 to 43 each bind GTP; these read GDEGKGK and GHT. Asp14 (proton acceptor) is an active-site residue. Mg(2+) contacts are provided by Asp14 and Gly41. IMP-binding positions include 14-17, 39-42, Thr130, Arg144, Gln223, Thr238, and Arg302; these read DEGK and NAGH. His42 acts as the Proton donor in catalysis. Residue 298 to 304 coordinates substrate; that stretch reads SVTGRKR. Residues Arg304 and 410–412 contribute to the GTP site; that span reads SVG.

The protein belongs to the adenylosuccinate synthetase family. As to quaternary structure, homodimer. The cofactor is Mg(2+).

Its subcellular location is the cytoplasm. The catalysed reaction is IMP + L-aspartate + GTP = N(6)-(1,2-dicarboxyethyl)-AMP + GDP + phosphate + 2 H(+). It functions in the pathway purine metabolism; AMP biosynthesis via de novo pathway; AMP from IMP: step 1/2. Plays an important role in the de novo pathway of purine nucleotide biosynthesis. Catalyzes the first committed step in the biosynthesis of AMP from IMP. The polypeptide is Adenylosuccinate synthetase (Porphyromonas gingivalis (strain ATCC BAA-308 / W83)).